Here is a 126-residue protein sequence, read N- to C-terminus: MPTVNQLVRQGRTMNKTKTKSPALMSCPQRRGVCTRVYTTTPKKPNSALRKVARVKLTSKVEVTAYIPGVGHNLQEHSIVLVRGGRVKDLPGVRYHIIRGALDASGVENRKQGRSLYGVKRPKAAK.

Over residues 1-16 (MPTVNQLVRQGRTMNK) the composition is skewed to polar residues. A disordered region spans residues 1-24 (MPTVNQLVRQGRTMNKTKTKSPAL). At aspartate 89 the chain carries 3-methylthioaspartic acid.

It belongs to the universal ribosomal protein uS12 family. As to quaternary structure, part of the 30S ribosomal subunit. Contacts proteins S8 and S17. May interact with IF1 in the 30S initiation complex.

Functionally, with S4 and S5 plays an important role in translational accuracy. In terms of biological role, interacts with and stabilizes bases of the 16S rRNA that are involved in tRNA selection in the A site and with the mRNA backbone. Located at the interface of the 30S and 50S subunits, it traverses the body of the 30S subunit contacting proteins on the other side and probably holding the rRNA structure together. The combined cluster of proteins S8, S12 and S17 appears to hold together the shoulder and platform of the 30S subunit. This chain is Small ribosomal subunit protein uS12, found in Elusimicrobium minutum (strain Pei191).